A 237-amino-acid polypeptide reads, in one-letter code: Ribonuclease PH (237 aa).

Phosphate-binding positions include arginine 86 and 124–126 (GTR).

It belongs to the RNase PH family. Homohexameric ring arranged as a trimer of dimers.

It catalyses the reaction tRNA(n+1) + phosphate = tRNA(n) + a ribonucleoside 5'-diphosphate. In terms of biological role, phosphorolytic 3'-5' exoribonuclease that plays an important role in tRNA 3'-end maturation. Removes nucleotide residues following the 3'-CCA terminus of tRNAs; can also add nucleotides to the ends of RNA molecules by using nucleoside diphosphates as substrates, but this may not be physiologically important. Probably plays a role in initiation of 16S rRNA degradation (leading to ribosome degradation) during starvation. In Alteromonas mediterranea (strain DSM 17117 / CIP 110805 / LMG 28347 / Deep ecotype), this protein is Ribonuclease PH.